The primary structure comprises 544 residues: MSQSPTNVPRSYNSVLDLKLASPTNSASGATGGWIVQKFGGTSVGKFPENIVDNIVKVYSQTNRVAVVCSARSSQTKSEGTTSRLLRSADLAENDKDYQPLLNAIEEDHVTNAERIQSEEIKQELIKDTKQEIEHVRELLHACQIIGEISPRSLDSIMAVGEKLSCLFMTALMKDHGLNAVYINLQDVIPLSYDFQKGFDDSFYQFLSQEIGKRVLQCDKEREGEEDVIPVLTGYFGVVPGGLLNGVGRGYTDLCAALAAVALQADELQIWKEVDGIFTADPRKVPNARLLDSVTPEEAAELTYYGSEVIHPFTMEQVIRAKIPIRIKNVENPTGKGTIIYPDNIGRRGEATPPHPPAAFEQLAMSSLLQRKRSATAITAKQDIVVINIHSNKKTLSHGFLAHVFTTLDKYKLVVDLISTSEVHVSMALSIQSDQESQLKHALVDLRKMGTVDVTKKMTIVSLVGKQMVNFIGIAGNMFKVLADEKINIEMISQGANEINISAVINEKDTIRALKSIHAKLLEGGSAIGDSSAVDTRLEALKLS.

Residues 463–535 (LVGKQMVNFI…SAIGDSSAVD (73 aa)) enclose the ACT domain.

The protein belongs to the aspartokinase family.

It catalyses the reaction L-aspartate + ATP = 4-phospho-L-aspartate + ADP. It functions in the pathway amino-acid biosynthesis; L-methionine biosynthesis via de novo pathway; L-homoserine from L-aspartate: step 1/3. It participates in amino-acid biosynthesis; L-threonine biosynthesis; L-threonine from L-aspartate: step 1/5. Its function is as follows. Phosphorylates aspartate, the first step in the biosynthesis of amino acids that derive from aspartate (the aspartate family of amino acids), including methioinine and threonine, the latter of which is a precursor to isoleucine. In Candida albicans (strain SC5314 / ATCC MYA-2876) (Yeast), this protein is Aspartokinase.